A 687-amino-acid chain; its full sequence is Outer dynein arm-docking complex subunit 1 (687 aa).

Coiled coils occupy residues 100–193 (QVRV…YLNV), 222–267 (REEA…LKLK), and 341–421 (INEQ…LFTR). Positions 126 to 147 (SRNSAHSKNARSPGCVQHDKVK) are disordered. Disordered regions lie at residues 363 to 388 (VSGR…QRVD), 487 to 511 (FPKK…AKDD), and 540 to 687 (ESTP…QSNY). Residues 366–388 (RRSEEDRRAQQEQQRAELQQRVD) show a composition bias toward basic and acidic residues. Over residues 544 to 556 (SMTSSTQKVSSSS) the composition is skewed to low complexity. Composition is skewed to polar residues over residues 557-611 (RLVT…SSRG) and 620-629 (RSPNSSSYLG). Low complexity predominate over residues 660-680 (SPGPASSPGPASSTGQASSTS).

It belongs to the ODA1/DCC2 family. Component of the outer dynein arm-docking complex along with ODAD2, ODAD3, ODAD4 and CLXN. Interacts with ODAD3. Interacts with ODAD4; this interaction may facilitate the recruitment and/or attachment of outer dynein arm docking complex proteins, including ODAD1, ODAD3, and ODAD4 to ciliary axonemes. Interacts with DNAH9. Interacts with MNS1. Interacts with PIERCE1 and PIERCE2; the interactions link the outer dynein arms docking complex (ODA-DC) to the internal microtubule inner proteins (MIP) in cilium axoneme. As to expression, expressed in trachea multiciliated cells.

It is found in the cytoplasm. The protein localises to the cytoskeleton. It localises to the cilium axoneme. Component of the outer dynein arm-docking complex (ODA-DC) that mediates outer dynein arms (ODA) binding onto the doublet microtubule. Involved in mediating assembly of both ODAs and their axonemal docking complex onto ciliary microtubules. The sequence is that of Outer dynein arm-docking complex subunit 1 (ODAD1) from Bos taurus (Bovine).